The chain runs to 137 residues: Small ribosomal subunit protein uS12 (137 aa).

The disordered stretch occupies residues 1 to 24 (MPTINQLVRKGRRSQSSKSKAPAL). A 3-methylthioaspartic acid modification is found at D102.

It belongs to the universal ribosomal protein uS12 family. In terms of assembly, part of the 30S ribosomal subunit. Contacts proteins S8 and S17. May interact with IF1 in the 30S initiation complex.

In terms of biological role, with S4 and S5 plays an important role in translational accuracy. Functionally, interacts with and stabilizes bases of the 16S rRNA that are involved in tRNA selection in the A site and with the mRNA backbone. Located at the interface of the 30S and 50S subunits, it traverses the body of the 30S subunit contacting proteins on the other side and probably holding the rRNA structure together. The combined cluster of proteins S8, S12 and S17 appears to hold together the shoulder and platform of the 30S subunit. The polypeptide is Small ribosomal subunit protein uS12 (Pediococcus pentosaceus (strain ATCC 25745 / CCUG 21536 / LMG 10740 / 183-1w)).